The following is a 208-amino-acid chain: Superoxide dismutase [Mn] 2 (208 aa).

Mn(2+) is bound by residues His-28, His-83, Asp-165, and His-169.

This sequence belongs to the iron/manganese superoxide dismutase family. Homodimer. Mn(2+) is required as a cofactor.

The enzyme catalyses 2 superoxide + 2 H(+) = H2O2 + O2. Destroys superoxide anion radicals which are normally produced within the cells and which are toxic to biological systems. The protein is Superoxide dismutase [Mn] 2 (sodA2) of Bacillus anthracis.